Here is a 392-residue protein sequence, read N- to C-terminus: Branched-chain-amino-acid aminotransferase, mitochondrial (392 aa).

The transit peptide at 1–27 (MAAAALGQIWARKFLSVPWLLCGPRRY) directs the protein to the mitochondrion. Position 168 (Tyr168) interacts with substrate. N6-(pyridoxal phosphate)lysine is present on Lys229. Position 321 is an N6-acetyllysine (Lys321).

It belongs to the class-IV pyridoxal-phosphate-dependent aminotransferase family. In terms of assembly, homodimer. Pyridoxal 5'-phosphate is required as a cofactor.

Its subcellular location is the mitochondrion. The enzyme catalyses L-leucine + 2-oxoglutarate = 4-methyl-2-oxopentanoate + L-glutamate. The catalysed reaction is L-isoleucine + 2-oxoglutarate = (S)-3-methyl-2-oxopentanoate + L-glutamate. It carries out the reaction L-valine + 2-oxoglutarate = 3-methyl-2-oxobutanoate + L-glutamate. Its function is as follows. Catalyzes the first reaction in the catabolism of the essential branched chain amino acids leucine, isoleucine, and valine. May also function as a transporter of branched chain alpha-keto acids. The chain is Branched-chain-amino-acid aminotransferase, mitochondrial (BCAT2) from Pongo abelii (Sumatran orangutan).